A 142-amino-acid polypeptide reads, in one-letter code: Large ribosomal subunit protein bL17 (142 aa).

The protein belongs to the bacterial ribosomal protein bL17 family. As to quaternary structure, part of the 50S ribosomal subunit. Contacts protein L32.

The protein is Large ribosomal subunit protein bL17 of Wolbachia sp. subsp. Brugia malayi (strain TRS).